The primary structure comprises 552 residues: Urocanate hydratase (552 aa).

NAD(+)-binding positions include 49 to 50, Gln127, 173 to 175, Asp193, 239 to 240, 260 to 264, 270 to 271, and Tyr319; these read GG, GMG, NA, QTSAH, and YI. Residue Cys407 is part of the active site. Gly489 contributes to the NAD(+) binding site.

Belongs to the urocanase family. NAD(+) serves as cofactor.

Its subcellular location is the cytoplasm. It carries out the reaction 4-imidazolone-5-propanoate = trans-urocanate + H2O. The protein operates within amino-acid degradation; L-histidine degradation into L-glutamate; N-formimidoyl-L-glutamate from L-histidine: step 2/3. Catalyzes the conversion of urocanate to 4-imidazolone-5-propionate. The chain is Urocanate hydratase from Bacillus cereus (strain ATCC 14579 / DSM 31 / CCUG 7414 / JCM 2152 / NBRC 15305 / NCIMB 9373 / NCTC 2599 / NRRL B-3711).